Reading from the N-terminus, the 344-residue chain is Serine/threonine-protein kinase ppk13 (344 aa).

Residues 38–46 and lysine 61 each bind ATP; that span reads LGEGGFAFV. Residues 76–344 enclose the Protein kinase domain; that stretch reads MKEADYHRKF…LSKIDLQINQ (269 aa). Catalysis depends on histidine 192, which acts as the Proton acceptor.

Belongs to the protein kinase superfamily. Ser/Thr protein kinase family.

It is found in the endoplasmic reticulum. It localises to the golgi apparatus. It catalyses the reaction L-seryl-[protein] + ATP = O-phospho-L-seryl-[protein] + ADP + H(+). It carries out the reaction L-threonyl-[protein] + ATP = O-phospho-L-threonyl-[protein] + ADP + H(+). This chain is Serine/threonine-protein kinase ppk13 (ppk13), found in Schizosaccharomyces pombe (strain 972 / ATCC 24843) (Fission yeast).